Here is a 493-residue protein sequence, read N- to C-terminus: Probable cytochrome P450 6a13 (493 aa).

Residue Cys435 participates in heme binding.

The protein belongs to the cytochrome P450 family. The cofactor is heme.

It is found in the endoplasmic reticulum membrane. It localises to the microsome membrane. May be involved in the metabolism of insect hormones and in the breakdown of synthetic insecticides. This is Probable cytochrome P450 6a13 (Cyp6a13) from Drosophila melanogaster (Fruit fly).